A 393-amino-acid chain; its full sequence is MKIKEKIVLAYSGGLDTSVIVKWLQNELNFEVITFTADLGQGEEILLAKKKAKLLNIKNIFVKNLKKEFIKNFVFPFLRSSSTYENNYLLGTAIARPLIVKELMKISYYLNTNYVSHGATGKGNDQIRFELGFKYFNPKIKIIAPWRIWNLNSRNSLLNFCIKNNIKFDSKTKKYSIDKNLFHNSYEGGNLDNINYEPDEPMWEHTLSNYNSLDYPIYISLTFKNGDPIKINNKNYNVEELFLKLNNLGSIAGIGRLDIIENRLIGIKSRGCYESPGASIIMYARKKLESLILDKEIYSFKEEIALKYSKLVYNGYWWSPERILLQKIIDYTQTSINGIIKLKIFKGQINIASINSINSLFNSKNSSFDEISNLFNQSDSSGFINIKSLRLII.

ATP is bound by residues 10–18 and Ala-37; that span reads AYSGGLDTS. Tyr-88 lines the L-citrulline pocket. Gly-118 lines the ATP pocket. L-aspartate-binding residues include Thr-120, Asn-124, and Asp-125. Asn-124 is an L-citrulline binding site. Arg-128, Ser-176, Ser-185, Glu-261, and Tyr-273 together coordinate L-citrulline.

It belongs to the argininosuccinate synthase family. Type 1 subfamily. In terms of assembly, homotetramer.

Its subcellular location is the cytoplasm. The enzyme catalyses L-citrulline + L-aspartate + ATP = 2-(N(omega)-L-arginino)succinate + AMP + diphosphate + H(+). It functions in the pathway amino-acid biosynthesis; L-arginine biosynthesis; L-arginine from L-ornithine and carbamoyl phosphate: step 2/3. The chain is Argininosuccinate synthase from Carsonella ruddii (strain PV).